We begin with the raw amino-acid sequence, 216 residues long: Adenylate kinase (216 aa).

Residue 10–15 (GAGKGT) participates in ATP binding. Residues 30 to 59 (STGDIFRKNISENTPLGIEAKSYMDNGQLV) form an NMP region. AMP-binding positions include T31, R36, 57–59 (QLV), 85–88 (GFPR), and Q92. The tract at residues 126–163 (GRRVCPSCGASYHIKFNPPTNDGKCDLCGSDVIQRKDD) is LID. An ATP-binding site is contributed by R127. C130 and C133 together coordinate Zn(2+). Residue 136-137 (SY) participates in ATP binding. Residues C150 and C153 each coordinate Zn(2+). AMP is bound by residues R160 and R171. Q199 is an ATP binding site.

It belongs to the adenylate kinase family. As to quaternary structure, monomer.

The protein resides in the cytoplasm. It carries out the reaction AMP + ATP = 2 ADP. It functions in the pathway purine metabolism; AMP biosynthesis via salvage pathway; AMP from ADP: step 1/1. In terms of biological role, catalyzes the reversible transfer of the terminal phosphate group between ATP and AMP. Plays an important role in cellular energy homeostasis and in adenine nucleotide metabolism. This chain is Adenylate kinase, found in Clostridium perfringens (strain ATCC 13124 / DSM 756 / JCM 1290 / NCIMB 6125 / NCTC 8237 / Type A).